Here is a 388-residue protein sequence, read N- to C-terminus: Beta-1,4-galactosyltransferase 5 (388 aa).

The Cytoplasmic portion of the chain corresponds to Met1–Ser14. The helical; Signal-anchor for type II membrane protein transmembrane segment at Leu15–Ala35 threads the bilayer. The Lumenal segment spans residues Pro36–Tyr388. 5 N-linked (GlcNAc...) asparagine glycosylation sites follow: Asn77, Asn81, Asn90, Asn111, and Asn128. The cysteines at positions 114 and 158 are disulfide-linked. UDP-alpha-D-galactose contacts are provided by residues Pro169–Arg173, Phe208–Arg210, Val235–Asp236, Tyr264, and Trp296. Cysteines 229 and 248 form a disulfide. Asp236 serves as a coordination point for Mn(2+). Gly298–Asp301 is a binding site for N-acetyl-D-glucosamine. Tyr329–His330 is a binding site for UDP-alpha-D-galactose. Residue Arg340 participates in N-acetyl-D-glucosamine binding. Asn364 and Asn373 each carry an N-linked (GlcNAc...) asparagine glycan.

This sequence belongs to the glycosyltransferase 7 family. As to quaternary structure, (Microbial infection) Interacts with porcine reproductive and respiratory syndrome virus GP5. It depends on Mn(2+) as a cofactor.

The protein resides in the golgi apparatus. It localises to the golgi stack membrane. It carries out the reaction a beta-D-glucosyl-(1&lt;-&gt;1')-N-acylsphing-4-enine + UDP-alpha-D-galactose = a beta-D-Gal-(1-&gt;4)-beta-D-Glc-(1&lt;-&gt;1)-Cer(d18:1(4E)) + UDP + H(+). It participates in protein modification; protein glycosylation. Its pathway is sphingolipid metabolism. In terms of biological role, catalyzes the synthesis of lactosylceramide (LacCer) via the transfer of galactose from UDP-galactose to glucosylceramide (GlcCer). LacCer is the starting point in the biosynthesis of all gangliosides (membrane-bound glycosphingolipids) which play pivotal roles in the CNS including neuronal maturation and axonal and myelin formation. Plays a role in the glycosylation of BMPR1A and regulation of its protein stability. Essential for extraembryonic development during early embryogenesis. Its function is as follows. (Microbial infection) May play a role in the glycosylation of porcine reproductive and respiratory syndrome virus GP5 protein and may be involved in the regulation of viral proliferation. The polypeptide is Beta-1,4-galactosyltransferase 5 (B4GALT5) (Sus scrofa (Pig)).